Reading from the N-terminus, the 431-residue chain is Light-independent protochlorophyllide reductase subunit N (431 aa).

[4Fe-4S] cluster contacts are provided by cysteine 29, cysteine 54, and cysteine 114.

This sequence belongs to the BchN/ChlN family. As to quaternary structure, protochlorophyllide reductase is composed of three subunits; ChlL, ChlN and ChlB. Forms a heterotetramer of two ChlB and two ChlN subunits. It depends on [4Fe-4S] cluster as a cofactor.

Its subcellular location is the plastid. It is found in the chloroplast. The catalysed reaction is chlorophyllide a + oxidized 2[4Fe-4S]-[ferredoxin] + 2 ADP + 2 phosphate = protochlorophyllide a + reduced 2[4Fe-4S]-[ferredoxin] + 2 ATP + 2 H2O. It participates in porphyrin-containing compound metabolism; chlorophyll biosynthesis (light-independent). Functionally, component of the dark-operative protochlorophyllide reductase (DPOR) that uses Mg-ATP and reduced ferredoxin to reduce ring D of protochlorophyllide (Pchlide) to form chlorophyllide a (Chlide). This reaction is light-independent. The NB-protein (ChlN-ChlB) is the catalytic component of the complex. This chain is Light-independent protochlorophyllide reductase subunit N, found in Nephroselmis olivacea (Green alga).